The primary structure comprises 106 residues: Large ribosomal subunit protein uL23 (106 aa).

It belongs to the universal ribosomal protein uL23 family. Part of the 50S ribosomal subunit. Contacts protein L29, and trigger factor when it is bound to the ribosome.

Functionally, one of the early assembly proteins it binds 23S rRNA. One of the proteins that surrounds the polypeptide exit tunnel on the outside of the ribosome. Forms the main docking site for trigger factor binding to the ribosome. The sequence is that of Large ribosomal subunit protein uL23 from Neisseria meningitidis serogroup C / serotype 2a (strain ATCC 700532 / DSM 15464 / FAM18).